A 52-amino-acid polypeptide reads, in one-letter code: Troponin C, skeletal muscle (52 aa).

2 EF-hand domains span residues 2 to 37 and 38 to 52; these read KSEE…SGEH and VTDE…DGDK. Ca(2+) is bound by residues Asp-15, Asn-17, Asp-19, Tyr-21, and Glu-26.

The protein belongs to the troponin C family.

Its function is as follows. Troponin is the central regulatory protein of striated muscle contraction. Tn consists of three components: Tn-I which is the inhibitor of actomyosin ATPase, Tn-T which contains the binding site for tropomyosin and Tn-C. The binding of calcium to Tn-C abolishes the inhibitory action of Tn on actin filaments. This Protopterus dolloi (Slender lungfish) protein is Troponin C, skeletal muscle.